A 100-amino-acid chain; its full sequence is Urease subunit gamma (100 aa).

Belongs to the urease gamma subunit family. As to quaternary structure, heterotrimer of UreA (gamma), UreB (beta) and UreC (alpha) subunits. Three heterotrimers associate to form the active enzyme.

It localises to the cytoplasm. It carries out the reaction urea + 2 H2O + H(+) = hydrogencarbonate + 2 NH4(+). It functions in the pathway nitrogen metabolism; urea degradation; CO(2) and NH(3) from urea (urease route): step 1/1. This chain is Urease subunit gamma, found in Burkholderia orbicola (strain MC0-3).